A 117-amino-acid chain; its full sequence is Large ribosomal subunit protein uL18 (117 aa).

It belongs to the universal ribosomal protein uL18 family. Part of the 50S ribosomal subunit; part of the 5S rRNA/L5/L18/L25 subcomplex. Contacts the 5S and 23S rRNAs.

Functionally, this is one of the proteins that bind and probably mediate the attachment of the 5S RNA into the large ribosomal subunit, where it forms part of the central protuberance. The protein is Large ribosomal subunit protein uL18 of Vibrio proteolyticus (Aeromonas proteolytica).